Here is a 497-residue protein sequence, read N- to C-terminus: Vacuolar-processing enzyme beta-isozyme 1 (497 aa).

Residues 1 to 23 (MAARCWVWGFVVALLAVAAAADG) form the signal peptide. The N-linked (GlcNAc...) asparagine glycan is linked to N153. Residue H180 is part of the active site. C222 (nucleophile) is an active-site residue. C255 and C269 form a disulfide bridge. An N-linked (GlcNAc...) asparagine glycan is attached at N340. 2 disulfides stabilise this stretch: C432/C462 and C444/C479.

The protein belongs to the peptidase C13 family. In terms of processing, auto-catalytic activation.

It is found in the protein storage vacuole. It catalyses the reaction Hydrolysis of proteins and small molecule substrates at -Asn-|-Xaa- bonds.. Its function is as follows. Asparagine-specific endopeptidase that may be involved in processing of proteins targeted to vacuoles. Cysteine protease required for post-translational proteolysis of seed storage proteins in the protein storage vacuole (PSV) of developing seeds, by processing of proglutelin precursor to mature glutelin subunits, thus contributing to the formation of protein crystalline structures in PSV. The protein is Vacuolar-processing enzyme beta-isozyme 1 of Oryza sativa subsp. indica (Rice).